A 251-amino-acid chain; its full sequence is Duodenase-1 (251 aa).

The signal sequence occupies residues 1–17 (MVLLLLLVALLSPTGEA). A propeptide spanning residues 18–19 (GK) is cleaved from the precursor. One can recognise a Peptidase S1 domain in the interval 20 to 242 (IIGGHEAKPH…SFLSWIHSTM (223 aa)). An intrachain disulfide couples Cys-48 to Cys-64. The active-site Charge relay system is His-63. N-linked (GlcNAc...) asparagine glycosylation is present at Asn-70. Asp-107 functions as the Charge relay system in the catalytic mechanism. 2 disulfides stabilise this stretch: Cys-141-Cys-207 and Cys-172-Cys-186. The active-site Charge relay system is the Ser-201.

It belongs to the peptidase S1 family. Monomer.

Its function is as follows. Protease which has both trypsin-like and chymotrypsin-like activities. Shows a preferential cleavage after Lys, Arg, Tyr, Phe, and Leu residues. The sequence is that of Duodenase-1 (BDMD1) from Bos taurus (Bovine).